The sequence spans 147 residues: Hemoglobin subunit beta (147 aa).

Positions 3–147 constitute a Globin domain; it reads EWTDKERSII…VVSALGKQYH (145 aa). The heme b site is built by H64 and H93.

This sequence belongs to the globin family. Hb1 is a heterotetramer of two alpha chains and two beta chains. In terms of tissue distribution, red blood cells.

Functionally, involved in oxygen transport from gills to the various peripheral tissues. The protein is Hemoglobin subunit beta (hbb) of Trematomus bernacchii (Emerald rockcod).